The chain runs to 1395 residues: Adventurous-gliding motility protein Z (1395 aa).

The 119-residue stretch at 4 to 122 (RVLIVESEHD…ELAALSHGIV (119 aa)) folds into the Response regulatory domain. Residue aspartate 48 is modified to 4-aspartylphosphate. Disordered regions lie at residues 137–172 (LNGT…AMTE), 874–893 (AAES…GLRS), 919–947 (EQHA…ARAH), 1212–1249 (AAES…AAKQ), 1287–1312 (RYKS…EDDE), and 1326–1395 (AAAA…ELDK). A coiled-coil region spans residues 213–911 (EGKIQILRDE…LEQTHGQLAA (699 aa)). Composition is skewed to basic and acidic residues over residues 919 to 928 (EQHAHQESRK) and 1228 to 1249 (QKER…AAKQ). 2 stretches are compositionally biased toward low complexity: residues 1291–1306 (KSAT…AKPA) and 1326–1352 (AAAA…KKAP). A compositionally biased stretch (acidic residues) spans 1382-1395 (EDDDWTALVDELDK).

Interacts with MglA.

The protein localises to the cytoplasm. Required for adventurous-gliding motility (A motility), in response to environmental signals sensed by the frz chemosensory system. Forms ordered clusters that span the cell length and that remain stationary relative to the surface across which the cells move, serving as anchor points (focal, transient adhesion sites) that allow the bacterium to move forward. Clusters disassemble at the lagging cell pole. This chain is Adventurous-gliding motility protein Z (aglZ), found in Myxococcus xanthus (strain DK1622).